Here is a 95-residue protein sequence, read N- to C-terminus: MSVDATTVRRIAHLARIAVTDDEVPHLQGELNAMLAFVEQLSEVDVEGVEPMTSVTPMQMKKRADLVDDGEITDKVVANAPASEDHFFLVPKVVE.

It belongs to the GatC family. As to quaternary structure, heterotrimer of A, B and C subunits.

It carries out the reaction L-glutamyl-tRNA(Gln) + L-glutamine + ATP + H2O = L-glutaminyl-tRNA(Gln) + L-glutamate + ADP + phosphate + H(+). The catalysed reaction is L-aspartyl-tRNA(Asn) + L-glutamine + ATP + H2O = L-asparaginyl-tRNA(Asn) + L-glutamate + ADP + phosphate + 2 H(+). Allows the formation of correctly charged Asn-tRNA(Asn) or Gln-tRNA(Gln) through the transamidation of misacylated Asp-tRNA(Asn) or Glu-tRNA(Gln) in organisms which lack either or both of asparaginyl-tRNA or glutaminyl-tRNA synthetases. The reaction takes place in the presence of glutamine and ATP through an activated phospho-Asp-tRNA(Asn) or phospho-Glu-tRNA(Gln). In Rhodopseudomonas palustris (strain BisA53), this protein is Aspartyl/glutamyl-tRNA(Asn/Gln) amidotransferase subunit C.